Here is a 951-residue protein sequence, read N- to C-terminus: Serine/threonine-protein kinase 10 (951 aa).

In terms of domain architecture, Protein kinase spans 36 to 294 (WEIIGELGDG…AAQLLEHPFV (259 aa)). ATP-binding positions include 42–50 (LGDGAFGKV) and Lys-65. Asp-157 (proton acceptor) is an active-site residue. Positions 319–330 (EENGEVEEEEAS) are enriched in acidic residues. The disordered stretch occupies residues 319 to 479 (EENGEVEEEE…DSGSNSASES (161 aa)). The segment covering 331–343 (DTPSSNKSVSQSA) has biased composition (polar residues). Residues 345–356 (GEKDKHTGKEHV) show a composition bias toward basic and acidic residues. Residues 364–373 (PQNTDSQADI) show a composition bias toward polar residues. Composition is skewed to basic and acidic residues over residues 374–394 (HSQK…HDAV) and 410–427 (HEPK…EEHG). Polar residues predominate over residues 429–443 (AVSSNQRPKSSQSDR). Ser-483, Ser-487, and Ser-491 each carry phosphoserine; by PLK1. Residues 583 to 723 (EQEMNSKRKF…NKKQQLLRDR (141 aa)) adopt a coiled-coil conformation. The segment covering 785 to 800 (QERARLPKNQKAEAKT) has biased composition (basic and acidic residues). The disordered stretch occupies residues 785–804 (QERARLPKNQKAEAKTRMTM). Positions 898 to 928 (RENLRPRKKALEDELEHKKEEQEMFFRMNEE) form a coiled coil. Positions 930-951 (AGHPFPSNKPAKFYSFSSPEAS) are disordered.

It belongs to the protein kinase superfamily. STE Ser/Thr protein kinase family. STE20 subfamily. As to quaternary structure, homodimer. Post-translationally, autophosphorylates. Phosphorylated by plk1/plx1, suggesting the existence of a feedback loop with plk1/plx1. activation of the protein.

Its subcellular location is the cell membrane. The catalysed reaction is L-seryl-[protein] + ATP = O-phospho-L-seryl-[protein] + ADP + H(+). It carries out the reaction L-threonyl-[protein] + ATP = O-phospho-L-threonyl-[protein] + ADP + H(+). Functionally, may act as a polo kinase kinase by mediating phosphorylation of plk1/plx1 and subsequent activation of plk1/plx1 during oocyte maturation. The sequence is that of Serine/threonine-protein kinase 10 (stk10) from Xenopus tropicalis (Western clawed frog).